The following is a 477-amino-acid chain: Endo-1,4-beta-xylanase A (477 aa).

A signal peptide spans 1 to 41 (MGSYALPRSGVRRSIRVLLLALVVGVLGTATALIAPPGAHA). One can recognise a GH10 domain in the interval 42–340 (AESTLGAAAA…KAAYTAVLDA (299 aa)). Glu-169 functions as the Proton donor in the catalytic mechanism. Glu-277 serves as the catalytic Nucleophile. Residues 361–477 (SGRCLDVPDA…NGSNQRWTRT (117 aa)) form the Ricin B-type lectin domain. 3 cysteine pairs are disulfide-bonded: Cys-364–Cys-383, Cys-406–Cys-423, and Cys-447–Cys-466.

It belongs to the glycosyl hydrolase 10 (cellulase F) family.

The protein resides in the secreted. It carries out the reaction Endohydrolysis of (1-&gt;4)-beta-D-xylosidic linkages in xylans.. It functions in the pathway glycan degradation; xylan degradation. Contributes to hydrolyze hemicellulose, the major component of plant cell-walls. XLNA and XLNB seem to act sequentially on the substrate to yield xylobiose and xylose as carbon sources. This Streptomyces lividans protein is Endo-1,4-beta-xylanase A (xlnA).